Here is a 476-residue protein sequence, read N- to C-terminus: Replication factor C large subunit (476 aa).

ATP is bound at residue 43–50 (GKPGIGKT). The disordered stretch occupies residues 435–476 (LEALRMQEPPVPETPPAAEEQPLEEPQEEKKLAPKQATLDFF).

This sequence belongs to the activator 1 small subunits family. RfcL subfamily. In terms of assembly, heteromultimer composed of small subunits (RfcS) and large subunits (RfcL).

Functionally, part of the RFC clamp loader complex which loads the PCNA sliding clamp onto DNA. The protein is Replication factor C large subunit of Methanocorpusculum labreanum (strain ATCC 43576 / DSM 4855 / Z).